We begin with the raw amino-acid sequence, 360 residues long: MKATLADKLARADERLEELDALLAQPEVAADMDSYRKLTREHAELSPVVGLYRQYKQVEADQKTAQEMLADADMRELAEAELADGAARITELENELQTALLPRDPNDERNIFLEIRAGTGGDESALFAGNLLRMYTRYAERQRWKVEIVSESPGEVGGYKEVIVRIVGEGAYSRLKFESGGHRVQRVPETESQGRIHTSACTVAVMPEAAEVGEVDINPADLRIDTFRASGAGGQHINKTDSAVRITHLPTGLVVECQDDRSQHRNRAQAMSVLAARLKDREIQAQQASEASTRKSLIGSGDRSDRIRTYNFPQGRITDHRINLTLYKIDAVMDGDLGELLDALAAEHQAAQLATLSGEG.

Gln-235 carries the N5-methylglutamine modification. A compositionally biased stretch (polar residues) spans 285–295 (AQQASEASTRK). Residues 285–305 (AQQASEASTRKSLIGSGDRSD) form a disordered region.

It belongs to the prokaryotic/mitochondrial release factor family. In terms of processing, methylated by PrmC. Methylation increases the termination efficiency of RF1.

It is found in the cytoplasm. In terms of biological role, peptide chain release factor 1 directs the termination of translation in response to the peptide chain termination codons UAG and UAA. The chain is Peptide chain release factor 1 from Thiobacillus denitrificans (strain ATCC 25259 / T1).